A 266-amino-acid polypeptide reads, in one-letter code: bZIP transcription factor 12 (266 aa).

In terms of domain architecture, bZIP spans 184-248 (AMQRQKRMIK…KELKEMVVPV (65 aa)). A basic motif region spans residues 187 to 205 (RQKRMIKNRESAARSRERK). Residues 202-244 (RERKQAYIAELESLVTQLEEENAKMFKEQEEQHQKRLKELKEM) adopt a coiled-coil conformation. The segment at 212 to 219 (LESLVTQL) is leucine-zipper.

The protein resides in the nucleus. In terms of biological role, transcription activator that binds to the ABA-responsive elements (ABREs) in vitro. Involved in abiotic stress responses and abscisic acid (ABA) signaling. Involved in the signaling pathway that induces growth inhibition in response to D-allose. The sequence is that of bZIP transcription factor 12 from Oryza sativa subsp. japonica (Rice).